Reading from the N-terminus, the 365-residue chain is Protein-glutamate methylesterase/protein-glutamine glutaminase 2 (365 aa).

Residues 6–123 (RVLIIDDSAS…ADSLSDDAMR (118 aa)) enclose the Response regulatory domain. The residue at position 57 (aspartate 57) is a 4-aspartylphosphate. The 187-residue stretch at 173–359 (AKTTEMVVCV…PLDQIAREVL (187 aa)) folds into the CheB-type methylesterase domain. Catalysis depends on residues serine 185, histidine 211, and aspartate 307.

Belongs to the CheB family. In terms of processing, phosphorylated by CheA. Phosphorylation of the N-terminal regulatory domain activates the methylesterase activity.

The protein resides in the cytoplasm. The catalysed reaction is [protein]-L-glutamate 5-O-methyl ester + H2O = L-glutamyl-[protein] + methanol + H(+). The enzyme catalyses L-glutaminyl-[protein] + H2O = L-glutamyl-[protein] + NH4(+). Involved in chemotaxis. Part of a chemotaxis signal transduction system that modulates chemotaxis in response to various stimuli. Catalyzes the demethylation of specific methylglutamate residues introduced into the chemoreceptors (methyl-accepting chemotaxis proteins or MCP) by CheR. Also mediates the irreversible deamidation of specific glutamine residues to glutamic acid. In Rhizobium johnstonii (strain DSM 114642 / LMG 32736 / 3841) (Rhizobium leguminosarum bv. viciae), this protein is Protein-glutamate methylesterase/protein-glutamine glutaminase 2.